Consider the following 110-residue polypeptide: Putative anti-sigma factor antagonist TM_1442 (110 aa).

The region spanning Leu4–Ala110 is the STAS domain. Ser59 bears the Phosphoserine mark.

It belongs to the anti-sigma-factor antagonist family. In terms of processing, phosphorylated on a serine residue.

Its function is as follows. In the phosphorylated form it could act as an anti-anti-sigma factor that counteracts an anti-sigma factor and thus releases a sigma factor from inhibition. The sequence is that of Putative anti-sigma factor antagonist TM_1442 from Thermotoga maritima (strain ATCC 43589 / DSM 3109 / JCM 10099 / NBRC 100826 / MSB8).